The following is a 640-amino-acid chain: Probable Ufm1-specific protease (640 aa).

Catalysis depends on residues Cys467, Asp591, and His593.

The protein belongs to the peptidase C78 family.

In terms of biological role, thiol protease which recognizes and hydrolyzes the peptide bond at the C-terminal Gly of ufm-1, a ubiquitin-like modifier protein bound to a number of target proteins. This chain is Probable Ufm1-specific protease, found in Oryza sativa subsp. japonica (Rice).